A 541-amino-acid polypeptide reads, in one-letter code: MATPVALLSESVLGWSIFTVVLLVILAFCWVYIRKYQSRQESEVISTITAICALAIALITSALLPVDIFLVSFMKHPNGTYKEWAANNETRVQIEDTVLYGYYTLYSIILFCVFLWIPFVYFYYEEKDEDNNNKCLQVKNALKYTIGFVIVCSALLLIGTFVPLASPPNQNSTQWQKVQYLFEELGSSHGLAALSFSISSLTLIGMLAVITYTAYGMSVLPLNLIKGTRSVLYERLENTEDTEEVERQIDKLKAKCADGRPLSMRDRRNLQDLEDKLQLLHRRGRHLEIAERNCCNKVGSALRPMKILLGVFFILVALLFFVTLFISNLDKALHSAGISTGFIIFGTNLTNPLNELLLALQPVFPLDYVLITVITMYFVFTSMAGIRNMGIWFFWIRLYKIRPQRTRPQALLFLCMILLLIVLHTSYMIYSLAPQYVMYGSQKYLLQTPLPTAVPSQSNRSATITKICDADAPEDQCTVTRSYLFLHKFWFFSTIYYFGNWAFLGVFLIGLVVSCCKGKKSVIEGEVDADDSDFSDDEYVH.

The Extracellular portion of the chain corresponds to 1-11; the sequence is MATPVALLSES. A helical membrane pass occupies residues 12-31; that stretch reads VLGWSIFTVVLLVILAFCWV. Topologically, residues 32–50 are cytoplasmic; the sequence is YIRKYQSRQESEVISTITA. The chain crosses the membrane as a helical span at residues 51-71; sequence ICALAIALITSALLPVDIFLV. Residues 72–101 are Extracellular-facing; the sequence is SFMKHPNGTYKEWAANNETRVQIEDTVLYG. 2 N-linked (GlcNAc...) asparagine glycosylation sites follow: Asn-78 and Asn-88. The chain crosses the membrane as a helical span at residues 102-122; sequence YYTLYSIILFCVFLWIPFVYF. At 123 to 145 the chain is on the cytoplasmic side; the sequence is YYEEKDEDNNNKCLQVKNALKYT. Residues 146–166 form a helical membrane-spanning segment; sequence IGFVIVCSALLLIGTFVPLAS. Over 167 to 189 the chain is Extracellular; that stretch reads PPNQNSTQWQKVQYLFEELGSSH. Asn-171 carries an N-linked (GlcNAc...) asparagine glycan. Residues 190 to 210 form a helical membrane-spanning segment; it reads GLAALSFSISSLTLIGMLAVI. Over 211 to 306 the chain is Cytoplasmic; that stretch reads TYTAYGMSVL…KVGSALRPMK (96 aa). Residues 307–327 traverse the membrane as a helical segment; sequence ILLGVFFILVALLFFVTLFIS. Over 328-365 the chain is Extracellular; that stretch reads NLDKALHSAGISTGFIIFGTNLTNPLNELLLALQPVFP. Asn-348 is a glycosylation site (N-linked (GlcNAc...) asparagine). A helical transmembrane segment spans residues 366-386; the sequence is LDYVLITVITMYFVFTSMAGI. At 387–409 the chain is on the cytoplasmic side; the sequence is RNMGIWFFWIRLYKIRPQRTRPQ. The chain crosses the membrane as a helical span at residues 410–430; sequence ALLFLCMILLLIVLHTSYMIY. Over 431–488 the chain is Extracellular; that stretch reads SLAPQYVMYGSQKYLLQTPLPTAVPSQSNRSATITKICDADAPEDQCTVTRSYLFLHK. Asn-459 carries an N-linked (GlcNAc...) asparagine glycan. Residues 489 to 509 form a helical membrane-spanning segment; sequence FWFFSTIYYFGNWAFLGVFLI. Topologically, residues 510–541 are cytoplasmic; the sequence is GLVVSCCKGKKSVIEGEVDADDSDFSDDEYVH.

The protein belongs to the LIMR family. LMBRD1 subfamily.

The protein resides in the endoplasmic reticulum membrane. It is found in the lysosome membrane. It localises to the cell membrane. In terms of biological role, lysosomal membrane chaperone required to export cobalamin (vitamin B12) from the lysosome to the cytosol, allowing its conversion to cofactors. Targets ABCD4 transporter from the endoplasmic reticulum to the lysosome. Then forms a complex with lysosomal ABCD4 and cytoplasmic MMACHC to transport cobalamin across the lysosomal membrane. May play a role in mediating and regulating the internalization of the insulin receptor. The sequence is that of Lysosomal cobalamin transport escort protein LMBD1 (lmbrd1) from Danio rerio (Zebrafish).